The following is an 812-amino-acid chain: Lon protease (812 aa).

Residues 11 to 204 form the Lon N-terminal domain; sequence IPVLPLRDVV…YLMAMMESEI (194 aa). An ATP-binding site is contributed by 356 to 363; sequence GPPGVGKT. The region spanning 592-773 is the Lon proteolytic domain; sequence ENRVGQVTGL…EEEQTLSLQN (182 aa). Active-site residues include Ser-679 and Lys-722. Positions 745-764 are enriched in basic and acidic residues; that stretch reads KENPDNAKADQDRHPVKNNE. The interval 745–766 is disordered; the sequence is KENPDNAKADQDRHPVKNNEEE.

This sequence belongs to the peptidase S16 family. Homohexamer. Organized in a ring with a central cavity. ATP binding and hydrolysis do not affect the oligomeric state of the enzyme.

It is found in the cytoplasm. It carries out the reaction Hydrolysis of proteins in presence of ATP.. Contains an allosteric site (distinct from its active site), whose occupancy by an unfolded polypeptide leads to enzyme activation. Its function is as follows. ATP-dependent serine protease that mediates the selective degradation of mutant and abnormal proteins as well as certain short-lived regulatory proteins. Required for cellular homeostasis and for survival from DNA damage and developmental changes induced by stress. Degrades polypeptides processively to yield small peptide fragments that are 5 to 10 amino acids long. Binds to DNA in a double-stranded, site-specific manner. Endogenous substrates include the regulatory proteins RcsA and SulA, the transcriptional activator SoxS, and UmuD. Its overproduction specifically inhibits translation through at least two different pathways, one of them being the YoeB-YefM toxin-antitoxin system. This Shigella dysenteriae serotype 1 (strain Sd197) protein is Lon protease.